The sequence spans 465 residues: Lysosomal dipeptide transporter MFSD1 (465 aa).

The disordered stretch occupies residues 1 to 23 (MEEEDEEARALLAGGPDEADRGA). Positions 11–12 (LL) match the Dileucine internalization motif motif. 12 consecutive transmembrane segments (helical) span residues 39–59 (LAHR…SYFC), 83–103 (LLYA…GFLI), 113–133 (TIIF…GGIF), 135–155 (AFWL…SLAV), 170–191 (LNLV…NMNL), 213–233 (ITLM…LALA), 266–286 (LWLI…FIGL), 303–323 (SAIN…FGLL), 331–351 (IIWV…LAFT), 361–381 (LLGL…AFVV), 392–412 (FMQS…GMIL), and 418–438 (LFLE…VVLL).

This sequence belongs to the major facilitator superfamily. As to quaternary structure, homodimer. Interacts with lysosomal protein GLMP (via lumenal domain); the interaction starts while both proteins are still in the endoplasmic reticulum and is required for stabilization of MFSD1 in lysosomes but has no direct effect on its targeting to lysosomes or transporter activity.

The protein resides in the lysosome membrane. The enzyme catalyses L-alpha-aminoacyl-L-arginine(out) = L-alpha-aminoacyl-L-arginine(in). The catalysed reaction is L-arginyl-L-alpha-amino acid(out) = L-arginyl-L-alpha-amino acid(in). It carries out the reaction L-arginyl-glycine(out) = L-arginyl-glycine(in). It catalyses the reaction L-alpha-aminoacyl-L-lysine(out) = L-alpha-aminoacyl-L-lysine(in). The enzyme catalyses L-aspartyl-L-lysine(out) = L-aspartyl-L-lysine(in). The catalysed reaction is L-alanyl-L-lysine(out) = L-alanyl-L-lysine(in). It carries out the reaction L-lysyl-L-alpha-amino acid(out) = L-lysyl-L-alpha-amino acid(in). It catalyses the reaction L-lysyl-L-alanine(out) = L-lysyl-L-alanine(in). The enzyme catalyses L-lysyl-L-lysine(out) = L-lysyl-L-lysine(in). The catalysed reaction is L-lysyl-glycine(out) = L-lysyl-glycine(in). It carries out the reaction L-alpha-aminoacyl-L-histidine(out) = L-alpha-aminoacyl-L-histidine(in). It catalyses the reaction L-histidyl-L-alpha-amino acid(out) = L-histidyl-L-alpha-amino acid(in). The enzyme catalyses L-histidyl-glycine(out) = L-histidyl-glycine(in). Functionally, lysosomal dipeptide uniporter that selectively exports lysine, arginine or histidine-containing dipeptides with a net positive charge from the lysosome lumen into the cytosol. Could play a role in a specific type of protein O-glycosylation indirectly regulating macrophages migration and tissue invasion. Also essential for liver homeostasis. The chain is Lysosomal dipeptide transporter MFSD1 from Homo sapiens (Human).